A 115-amino-acid polypeptide reads, in one-letter code: NADH-ubiquinone oxidoreductase chain 3 (115 aa).

The next 3 membrane-spanning stretches (helical) occupy residues 3-23 (LMLT…IAFW), 55-75 (FFLV…LLPL), and 86-106 (TMLT…AYEW).

This sequence belongs to the complex I subunit 3 family. Core subunit of respiratory chain NADH dehydrogenase (Complex I) which is composed of 45 different subunits. Interacts with TMEM186. Interacts with TMEM242.

The protein resides in the mitochondrion inner membrane. The enzyme catalyses a ubiquinone + NADH + 5 H(+)(in) = a ubiquinol + NAD(+) + 4 H(+)(out). In terms of biological role, core subunit of the mitochondrial membrane respiratory chain NADH dehydrogenase (Complex I) which catalyzes electron transfer from NADH through the respiratory chain, using ubiquinone as an electron acceptor. Essential for the catalytic activity of complex I. The chain is NADH-ubiquinone oxidoreductase chain 3 from Ceratotherium simum (White rhinoceros).